A 166-amino-acid polypeptide reads, in one-letter code: MNEWMKKGPLEWQDYTYKAVSVTASDKEYKGWVLTTDPVSANIVLVNFLEDGSMSVTGIMGHAVQTVEIVNEGDHSVREKLMHLFMSGDCKAYSPEDLEKRKNSLKKWLEKNHIPITEQRDSRKTLCVAGVLTIDPPYGPENCNSSNEIILSRVQDLIQGHLEASQ.

One can recognise a Sm domain in the interval Trp-4–Gly-73. One can recognise an AD domain in the interval Glu-68–Gln-166. Phosphoserine occurs at positions 94 and 165.

Part of the core SMN complex that contains SMN1, GEMIN2/SIP1, DDX20/GEMIN3, GEMIN4, GEMIN5, GEMIN6, GEMIN7, GEMIN8 and STRAP/UNRIP. Part of the SMN-Sm complex that contains SMN1, GEMIN2/SIP1, DDX20/GEMIN3, GEMIN4, GEMIN5, GEMIN6, GEMIN7, GEMIN8, STRAP/UNRIP and the Sm proteins SNRPB, SNRPD1, SNRPD2, SNRPD3, SNRPE, SNRPF and SNRPG. Interacts with GEMIN7; the interaction is direct. Interacts with GEMIN8; the interaction is direct. Interacts with SNRPB, SNRPD2, SNRPD3 and SNRPE; the interaction is direct.

It is found in the nucleus. Its subcellular location is the nucleoplasm. It localises to the gem. The protein localises to the cytoplasm. Its function is as follows. The SMN complex catalyzes the assembly of small nuclear ribonucleoproteins (snRNPs), the building blocks of the spliceosome, and thereby plays an important role in the splicing of cellular pre-mRNAs. Most spliceosomal snRNPs contain a common set of Sm proteins SNRPB, SNRPD1, SNRPD2, SNRPD3, SNRPE, SNRPF and SNRPG that assemble in a heptameric protein ring on the Sm site of the small nuclear RNA to form the core snRNP (Sm core). In the cytosol, the Sm proteins SNRPD1, SNRPD2, SNRPE, SNRPF and SNRPG are trapped in an inactive 6S pICln-Sm complex by the chaperone CLNS1A that controls the assembly of the core snRNP. To assemble core snRNPs, the SMN complex accepts the trapped 5Sm proteins from CLNS1A forming an intermediate. Binding of snRNA inside 5Sm triggers eviction of the SMN complex, thereby allowing binding of SNRPD3 and SNRPB to complete assembly of the core snRNP. This Bos taurus (Bovine) protein is Gem-associated protein 6 (GEMIN6).